The chain runs to 392 residues: MTLLGTALRPAATRVMLLGAGELGKEVAIECQRLGIEVIAVDRYPDAPAMHVAHRSHVINMLDGEALRHVITEEKPHYIVPEIEAIATDTLRELEGEGLNVVPCARATQLTMNREGIRRLAAEELGLPTSTYRFADSEASFHDAVAAVGFPCIVKPVMSSSGKGQSFIRSAEQLAQAWEYAQQGGRAGAGRVIVEGVVKFDFEITLLTVSAVDGVHFCAPVGHRQQDGDYRESWQPQQMSELALKRAQEIARHVVLALGGHGLFGVELFVCGDEVIFSEVSPRPHDTGMVTLISQDLSEFALHVRAFLGMPVGAIRQYGPAASAVILPQLTSQNVTFDNVHAAVGAGVQVRLFGKPEIDGTRRLGVALATGENVEEAVIRAKKAASRVTVKG.

N(1)-(5-phospho-beta-D-ribosyl)glycinamide-binding positions include 22 to 23 (EL) and E82. ATP is bound by residues R114, K155, 160 to 165 (SSGKGQ), 195 to 198 (EGVV), and E203. In terms of domain architecture, ATP-grasp spans 119-308 (RLAAEELGLP…EFALHVRAFL (190 aa)). Residues E267 and E279 each contribute to the Mg(2+) site. N(1)-(5-phospho-beta-D-ribosyl)glycinamide is bound by residues D286, K355, and 362–363 (RR).

It belongs to the PurK/PurT family. In terms of assembly, homodimer.

The catalysed reaction is N(1)-(5-phospho-beta-D-ribosyl)glycinamide + formate + ATP = N(2)-formyl-N(1)-(5-phospho-beta-D-ribosyl)glycinamide + ADP + phosphate + H(+). It participates in purine metabolism; IMP biosynthesis via de novo pathway; N(2)-formyl-N(1)-(5-phospho-D-ribosyl)glycinamide from N(1)-(5-phospho-D-ribosyl)glycinamide (formate route): step 1/1. In terms of biological role, involved in the de novo purine biosynthesis. Catalyzes the transfer of formate to 5-phospho-ribosyl-glycinamide (GAR), producing 5-phospho-ribosyl-N-formylglycinamide (FGAR). Formate is provided by PurU via hydrolysis of 10-formyl-tetrahydrofolate. The protein is Formate-dependent phosphoribosylglycinamide formyltransferase of Salmonella dublin (strain CT_02021853).